We begin with the raw amino-acid sequence, 219 residues long: RPA-interacting protein (219 aa).

Ser18 is subject to Phosphoserine. The segment at 137-212 (CPVCIKYNLR…PSLLMNCLTC (76 aa)) adopts an RIP-type zinc-finger fold. Positions 164–180 (STDLTEQKLRACLEENV) are mediates nuclear export.

Interacts with the RPA1 subunit of RPA complex. In terms of processing, sumoylated; required for localization in the nuclear PML body and transport of RPA complex in PML body. Upon UV irradiation and during S phase, it is desumoylated, releasing RPA complex that is translocated to sites of DNA damage. Sumoylation takes place at different Lys residues.

Its subcellular location is the nucleus. In terms of biological role, mediates the import of RPA complex into the nucleus, possibly via some interaction with importin beta. Sumoylation mediates the localization of RPA complex into the PML body of the nucleus, thereby participating in RPA function in DNA metabolism. The sequence is that of RPA-interacting protein (Rpain) from Mus musculus (Mouse).